The chain runs to 135 residues: MPFRVEVLNETSGGARLTPERATELCRRAFVERGLDPERMGELSVALVEPEVIHDLNLKFRNKDAPTDVLSFEVDGPYGEMVGEIVICPGCAEMDLEELVVHGALHLSGMDHGENFEASEMARVQKRVMEAVRGR.

Zn(2+) is bound by residues H102, H106, and H112.

This sequence belongs to the endoribonuclease YbeY family. Requires Zn(2+) as cofactor.

It localises to the cytoplasm. In terms of biological role, single strand-specific metallo-endoribonuclease involved in late-stage 70S ribosome quality control and in maturation of the 3' terminus of the 16S rRNA. The protein is Endoribonuclease YbeY of Rubrobacter xylanophilus (strain DSM 9941 / JCM 11954 / NBRC 16129 / PRD-1).